We begin with the raw amino-acid sequence, 452 residues long: Phosphoglucosamine mutase (452 aa).

Ser103 serves as the catalytic Phosphoserine intermediate. 4 residues coordinate Mg(2+): Ser103, Asp243, Asp245, and Asp247. Ser103 is modified (phosphoserine).

This sequence belongs to the phosphohexose mutase family. Mg(2+) is required as a cofactor. Activated by phosphorylation.

It carries out the reaction alpha-D-glucosamine 1-phosphate = D-glucosamine 6-phosphate. Functionally, catalyzes the conversion of glucosamine-6-phosphate to glucosamine-1-phosphate. The chain is Phosphoglucosamine mutase from Exiguobacterium sp. (strain ATCC BAA-1283 / AT1b).